Consider the following 89-residue polypeptide: UPF0147 protein TV0625 (89 aa).

This sequence belongs to the UPF0147 family.

The chain is UPF0147 protein TV0625 from Thermoplasma volcanium (strain ATCC 51530 / DSM 4299 / JCM 9571 / NBRC 15438 / GSS1).